We begin with the raw amino-acid sequence, 403 residues long: Arginine deiminase (403 aa).

The active-site Amidino-cysteine intermediate is C388.

The protein belongs to the arginine deiminase family.

The protein resides in the cytoplasm. It catalyses the reaction L-arginine + H2O = L-citrulline + NH4(+). It participates in amino-acid degradation; L-arginine degradation via ADI pathway; carbamoyl phosphate from L-arginine: step 1/2. The sequence is that of Arginine deiminase from Mycoplasma capricolum subsp. capricolum (strain California kid / ATCC 27343 / NCTC 10154).